Consider the following 270-residue polypeptide: Ribosomal RNA small subunit methyltransferase A (270 aa).

6 residues coordinate S-adenosyl-L-methionine: His-11, Leu-13, Gly-38, Glu-59, Asp-84, and Asn-109.

The protein belongs to the class I-like SAM-binding methyltransferase superfamily. rRNA adenine N(6)-methyltransferase family. RsmA subfamily.

The protein resides in the cytoplasm. The enzyme catalyses adenosine(1518)/adenosine(1519) in 16S rRNA + 4 S-adenosyl-L-methionine = N(6)-dimethyladenosine(1518)/N(6)-dimethyladenosine(1519) in 16S rRNA + 4 S-adenosyl-L-homocysteine + 4 H(+). Specifically dimethylates two adjacent adenosines (A1518 and A1519) in the loop of a conserved hairpin near the 3'-end of 16S rRNA in the 30S particle. May play a critical role in biogenesis of 30S subunits. The chain is Ribosomal RNA small subunit methyltransferase A from Crocosphaera subtropica (strain ATCC 51142 / BH68) (Cyanothece sp. (strain ATCC 51142)).